The sequence spans 617 residues: uncharacterized protein (617 aa).

The B12-binding N-terminal domain maps to 33–134 (TEDDFRGEKF…FXNATKQKGS (102 aa)). Residues E84, 146–150 (GDVHD), H149, S194, T198, and A251 contribute to the methylcob(III)alamin site. The region spanning 136–272 (NGKVVIATVK…NPEGRAALWE (137 aa)) is the B12-binding domain. The 330-residue stretch at 288–617 (SKPLRKQLSI…MMKWLGVAMK (330 aa)) folds into the AdoMet activation domain. Residues D337, R528, and 583–584 (YF) each bind S-adenosyl-L-methionine.

The protein belongs to the vitamin-B12 dependent methionine synthase family.

This is an uncharacterized protein from Haemophilus influenzae (strain ATCC 51907 / DSM 11121 / KW20 / Rd).